The following is a 440-amino-acid chain: Xaa-Pro dipeptidase (440 aa).

Aspartate 244, aspartate 255, histidine 335, glutamate 380, and glutamate 419 together coordinate Mn(2+).

Belongs to the peptidase M24B family. Bacterial-type prolidase subfamily. Mn(2+) is required as a cofactor.

The catalysed reaction is Xaa-L-Pro dipeptide + H2O = an L-alpha-amino acid + L-proline. Splits dipeptides with a prolyl residue in the C-terminal position. The polypeptide is Xaa-Pro dipeptidase (Shewanella baltica (strain OS223)).